The following is a 1155-amino-acid chain: Cilia- and flagella-associated protein 251 (1155 aa).

2 stretches are compositionally biased toward basic and acidic residues: residues Met-1–Glu-19 and Lys-31–Glu-59. Disordered regions lie at residues Met-1–Leu-144 and Leu-167–Ser-225. Residues Glu-60 to Glu-69 show a composition bias toward acidic residues. Basic and acidic residues predominate over residues Glu-70 to Ala-95. The segment covering Gln-99–Glu-111 has biased composition (low complexity). Composition is skewed to polar residues over residues Thr-118–Ser-128 and Pro-172–Arg-182. A compositionally biased stretch (basic and acidic residues) spans Gly-201–Val-220. WD repeat units follow at residues Pro-341–Trp-383, Ala-391–Glu-431, Leu-442–Ile-481, Pro-499–His-534, Ser-537–Leu-597, Gly-601–Tyr-641, Leu-647–Ala-684, Pro-694–Val-730, Trp-737–Leu-780, Leu-791–Ala-831, Arg-837–Val-883, Lys-889–Ile-927, Tyr-965–Ser-1005, and Gly-1025–Asn-1065.

Its subcellular location is the cytoplasm. The protein localises to the cytoskeleton. It localises to the cilium axoneme. It is found in the cell projection. The protein resides in the cilium. Its subcellular location is the flagellum. In terms of biological role, involved in spermatozoa motility. May also regulate cilium motility through its role in the assembly of the axonemal radial spokes. This chain is Cilia- and flagella-associated protein 251, found in Pongo abelii (Sumatran orangutan).